The sequence spans 288 residues: Mortality factor 4-like protein 2 (288 aa).

Polar residues predominate over residues 1 to 15 (MSSRKQASQTRGQQS). A disordered region spans residues 1-115 (MSSRKQASQT…DPTVESEEAF (115 aa)). At Ser71 the chain carries Phosphoserine. An MRG domain is found at 117 to 288 (SRMEVKVKIP…ASADYHRKAL (172 aa)).

Component of the NuA4 histone acetyltransferase complex which contains the catalytic subunit KAT5/TIP60 and the subunits EP400, TRRAP/PAF400, BRD8/SMAP, EPC1, DMAP1/DNMAP1, RUVBL1/TIP49, RUVBL2, ING3, actin, ACTL6A/BAF53A, MORF4L1/MRG15, MORF4L2/MRGX, MRGBP, YEATS4/GAS41 and VPS72/YL1. The NuA4 complex interacts with MYC and the adenovirus E1A protein. MORF4L1 may also participate in the formation of NuA4 related complexes which lack the KAT5/TIP60 catalytic subunit, but which include the SWI/SNF related protein SRCAP. Component of the MSIN3A histone deacetylase complex, which includes SIN3A, HDAC2, ARID4B, MORF4L1, RBBP4/RbAp48, and RBBP7/RbAp46. Interacts with MRFAP1 and RB1. May also interact with one or more as yet undefined members of the TLE (transducin-like enhancer of split) family of transcriptional repressors.

Its subcellular location is the nucleus. In terms of biological role, component of the NuA4 histone acetyltransferase complex which is involved in transcriptional activation of select genes principally by acetylation of nucleosomal histone H4 and H2A. This modification may both alter nucleosome - DNA interactions and promote interaction of the modified histones with other proteins which positively regulate transcription. This complex may be required for the activation of transcriptional programs associated with oncogene and proto-oncogene mediated growth induction, tumor suppressor mediated growth arrest and replicative senescence, apoptosis, and DNA repair. The NuA4 complex ATPase and helicase activities seem to be, at least in part, contributed by the association of RUVBL1 and RUVBL2 with EP400. NuA4 may also play a direct role in DNA repair when directly recruited to sites of DNA damage. Also a component of the MSIN3A complex which acts to repress transcription by deacetylation of nucleosomal histones. This chain is Mortality factor 4-like protein 2 (Morf4l2), found in Mus musculus (Mouse).